Here is a 255-residue protein sequence, read N- to C-terminus: Putative cysteine-rich repeat secretory protein 10 (255 aa).

The signal sequence occupies residues 1–26; it reads MFSSSVSISILVVVAMQFSFIHNVLS. Gnk2-homologous domains are found at residues 33-134 and 140-252; these read YLQH…EIYT and FKHY…LYPF.

The protein belongs to the cysteine-rich repeat secretory protein family.

The protein localises to the secreted. The polypeptide is Putative cysteine-rich repeat secretory protein 10 (CRRSP10) (Arabidopsis thaliana (Mouse-ear cress)).